The following is an 82-amino-acid chain: Large ribosomal subunit protein uL24c (82 aa).

The protein belongs to the universal ribosomal protein uL24 family. In terms of assembly, part of the 50S ribosomal subunit.

It is found in the plastid. The protein localises to the chloroplast. In terms of biological role, one of two assembly initiator proteins, it binds directly to the 5'-end of the 23S rRNA, where it nucleates assembly of the 50S subunit. This chain is Large ribosomal subunit protein uL24c (rpl24), found in Phaeodactylum tricornutum (strain CCAP 1055/1).